Consider the following 260-residue polypeptide: MIPSLWISKTGLDAQQINMNIISNNLANVSTNGFKRSRAVFEDLMYQTIREAGTNSSLETTLPSGLQLGTGVRPVSTERIHTQGNLSKTDASKDVAINGSGFFQVQLPDGNIAYTRDGSFQLDQNGQLVTNSGFPIIPEINIPSNSTNINIARDGVISVVVQGQTQPVLLGQLNLINFVNNSGLESLGENLYQETQASGSPIETTPGLNGTGVLYQGYVETSNVNVAEELVNMIQTQRAYEINSKSISTSDQMLQKLSQL.

Belongs to the flagella basal body rod proteins family. As to quaternary structure, the basal body constitutes a major portion of the flagellar organelle and consists of four rings (L,P,S, and M) mounted on a central rod. The rod consists of about 26 subunits of FlgG in the distal portion, and FlgB, FlgC and FlgF are thought to build up the proximal portion of the rod with about 6 subunits each.

It is found in the bacterial flagellum basal body. This chain is Flagellar basal-body rod protein FlgG (flgG), found in Buchnera aphidicola subsp. Acyrthosiphon pisum (strain APS) (Acyrthosiphon pisum symbiotic bacterium).